An 874-amino-acid polypeptide reads, in one-letter code: DNA mismatch repair protein MutS (874 aa).

Position 613–620 (Gly-613–Ser-620) interacts with ATP. The interval Glu-799 to Thr-820 is disordered.

The protein belongs to the DNA mismatch repair MutS family.

This protein is involved in the repair of mismatches in DNA. It is possible that it carries out the mismatch recognition step. This protein has a weak ATPase activity. The chain is DNA mismatch repair protein MutS from Marinobacter nauticus (strain ATCC 700491 / DSM 11845 / VT8) (Marinobacter aquaeolei).